The following is a 114-amino-acid chain: Cytochrome c2 (114 aa).

A Pyrrolidone carboxylic acid modification is found at Q1. Residues C13, C16, H17, and M93 each coordinate heme c.

This sequence belongs to the cytochrome c family. In terms of processing, binds 1 heme c group covalently per subunit.

The protein localises to the periplasm. Cytochrome c2 is found mainly in purple, non-sulfur, photosynthetic bacteria where it functions as the electron donor to the oxidized bacteriochlorophyll in the photophosphorylation pathway. However, it may also have a role in the respiratory chain and is found in some non-photosynthetic bacteria. The sequence is that of Cytochrome c2 from Rhodopseudomonas palustris.